A 429-amino-acid chain; its full sequence is C4-dicarboxylate transport protein (429 aa).

8 consecutive transmembrane segments (helical) span residues 3-23, 44-64, 76-96, 142-162, 184-204, 222-242, 326-346, and 352-372; these read LTIFKSLYFQVLTAITLGVLL, LIKMIIAPVIFCTVVTGIAGM, IALLYFEIVSTIALLIGLLIV, IGAFASGNILQVLLFAVLFGF, VIFGIINMIMRLAPLGAFGAM, LIACFYLTCILFVVVVLGSIA, VIHQVTLLVVLLLSSKGAAGV, and IVLAATISAVGHLPLAGLALI.

Belongs to the dicarboxylate/amino acid:cation symporter (DAACS) (TC 2.A.23) family.

Its subcellular location is the cell inner membrane. Responsible for the transport of dicarboxylates such as succinate, fumarate, and malate from the periplasm across the membrane. This Serratia proteamaculans (strain 568) protein is C4-dicarboxylate transport protein.